Reading from the N-terminus, the 379-residue chain is 8-amino-7-oxononanoate synthase (379 aa).

Substrate is bound by residues arginine 27 and arginine 34. 114–115 is a pyridoxal 5'-phosphate binding site; sequence GY. Histidine 139 contributes to the substrate binding site. Pyridoxal 5'-phosphate is bound by residues serine 187, 212-215, and 232-235; these read DDAH and TLSK. Lysine 235 is modified (N6-(pyridoxal phosphate)lysine). Substrate is bound at residue threonine 344.

The protein belongs to the class-II pyridoxal-phosphate-dependent aminotransferase family. BioF subfamily. As to quaternary structure, homodimer. Requires pyridoxal 5'-phosphate as cofactor.

The enzyme catalyses 6-carboxyhexanoyl-[ACP] + L-alanine + H(+) = (8S)-8-amino-7-oxononanoate + holo-[ACP] + CO2. The protein operates within cofactor biosynthesis; biotin biosynthesis. Functionally, catalyzes the decarboxylative condensation of pimeloyl-[acyl-carrier protein] and L-alanine to produce 8-amino-7-oxononanoate (AON), [acyl-carrier protein], and carbon dioxide. This Methylobacterium nodulans (strain LMG 21967 / CNCM I-2342 / ORS 2060) protein is 8-amino-7-oxononanoate synthase.